Here is a 142-residue protein sequence, read N- to C-terminus: ATP synthase epsilon chain (142 aa).

The protein belongs to the ATPase epsilon chain family. In terms of assembly, F-type ATPases have 2 components, CF(1) - the catalytic core - and CF(0) - the membrane proton channel. CF(1) has five subunits: alpha(3), beta(3), gamma(1), delta(1), epsilon(1). CF(0) has three main subunits: a, b and c.

The protein localises to the cell inner membrane. Produces ATP from ADP in the presence of a proton gradient across the membrane. This Shewanella putrefaciens (strain CN-32 / ATCC BAA-453) protein is ATP synthase epsilon chain.